The following is a 378-amino-acid chain: Cobalt-precorrin-5B C(1)-methyltransferase (378 aa).

This sequence belongs to the CbiD family.

It carries out the reaction Co-precorrin-5B + S-adenosyl-L-methionine = Co-precorrin-6A + S-adenosyl-L-homocysteine. It functions in the pathway cofactor biosynthesis; adenosylcobalamin biosynthesis; cob(II)yrinate a,c-diamide from sirohydrochlorin (anaerobic route): step 6/10. Catalyzes the methylation of C-1 in cobalt-precorrin-5B to form cobalt-precorrin-6A. The sequence is that of Cobalt-precorrin-5B C(1)-methyltransferase from Thermoplasma volcanium (strain ATCC 51530 / DSM 4299 / JCM 9571 / NBRC 15438 / GSS1).